The following is a 99-amino-acid chain: Plastocyanin (99 aa).

A Plastocyanin-like domain is found at 1–99; sequence LDVLLGSDDG…AGMVGKVTVN (99 aa). Cu cation-binding residues include His-37, Cys-84, His-87, and Met-92.

Belongs to the plastocyanin family. The cofactor is Cu(2+).

Its subcellular location is the plastid. It is found in the chloroplast thylakoid membrane. Functionally, participates in electron transfer between P700 and the cytochrome b6-f complex in photosystem I. This is Plastocyanin (PETE) from Mercurialis perennis (Dog's mercury).